A 732-amino-acid chain; its full sequence is Bromodomain-containing factor 1 (732 aa).

Polar residues predominate over residues 1-22; it reads MSETFPETNTPVQTPSTESFVN. 5 disordered regions span residues 1 to 207, 324 to 380, 491 to 517, 556 to 600, and 700 to 732; these read MSET…NLPE, TNVA…ETKP, NKPVPEPTPQNSDVSDREYSSEEEDNV, REQQ…TPPQ, and VNGQQGSDNGFMKVVNQEESSEDEASSESSEEE. A compositionally biased stretch (low complexity) spans 37 to 51; sequence SQDSDSNQQSSHQEP. Residues 89-100 are compositionally biased toward polar residues; sequence ASQTGVIQTEVS. Residues 137–147 are compositionally biased toward acidic residues; that stretch reads EAPEENPQEEV. Positions 206–315 constitute a Bromo 1 domain; the sequence is PENPIPQHQA…AQFEKLMVKV (110 aa). Residues 327–338 show a composition bias toward polar residues; that stretch reads AEATSVATSPTT. The span at 370 to 380 shows a compositional bias: basic and acidic residues; sequence KSKELPYETKP. The 110-residue stretch at 383–492 folds into the Bromo 2 domain; sequence KKVAAELRFC…AVFDKKWANK (110 aa). Residues 529 to 569 are a coiled coil; that stretch reads AIQVMENQIIRMRKELDELKKEHLKKLREQQAARKKKKQQK. The span at 561–579 shows a compositional bias: basic residues; that stretch reads ARKKKKQQKGKRRAPKAKH. The segment covering 590–600 has biased composition (pro residues); that stretch reads PPEPPKLTPPQ. The NET domain maps to 593-672; it reads PPKLTPPQPV…GDKALKNSAG (80 aa). The span at 718–732 shows a compositional bias: acidic residues; the sequence is ESSEDEASSESSEEE.

It belongs to the BET family.

It localises to the nucleus. Its function is as follows. Transcription factor involved in the expression of a broad class of genes including snRNAs. Required for sporulation and DNA-damage repair. Prevents the spreading of SIR silencing at telomeres and protects histone H4, but not H3, from deacetylation. The protein is Bromodomain-containing factor 1 (BDF1) of Candida albicans (strain SC5314 / ATCC MYA-2876) (Yeast).